The chain runs to 41 residues: Large ribosomal subunit protein bL36 (41 aa).

The protein belongs to the bacterial ribosomal protein bL36 family.

This chain is Large ribosomal subunit protein bL36, found in Granulibacter bethesdensis (strain ATCC BAA-1260 / CGDNIH1).